The chain runs to 408 residues: Putative transporter AmpG 2 (408 aa).

The next 11 helical transmembrane spans lie at 11 to 31 (IFNI…YLLT), 49 to 69 (IGLF…GPLL), 84 to 104 (YCLV…TSFN), 110 to 130 (IPFV…DMLI), 154 to 174 (FRIG…IISW), 177 to 197 (VYRT…FYPL), 224 to 244 (CIVI…LSIM), 261 to 281 (VGYK…GGFL), 294 to 311 (VLIY…LYFL), 353 to 373 (IALI…ISGY), and 382 to 402 (YFFI…LYLP).

It belongs to the major facilitator superfamily.

The protein resides in the cell inner membrane. The chain is Putative transporter AmpG 2 (ampG2) from Rickettsia prowazekii (strain Madrid E).